The chain runs to 110 residues: Flagellar hook-basal body complex protein FliE (110 aa).

It belongs to the FliE family.

Its subcellular location is the bacterial flagellum basal body. The polypeptide is Flagellar hook-basal body complex protein FliE (Pseudomonas entomophila (strain L48)).